The chain runs to 269 residues: NAD kinase (269 aa).

Catalysis depends on D45, which acts as the Proton acceptor. Residues 45–46 (DG), 121–122 (NE), R147, D149, 160–165 (TAYNRS), and A184 each bind NAD(+).

Belongs to the NAD kinase family. A divalent metal cation serves as cofactor.

The protein resides in the cytoplasm. It carries out the reaction NAD(+) + ATP = ADP + NADP(+) + H(+). Functionally, involved in the regulation of the intracellular balance of NAD and NADP, and is a key enzyme in the biosynthesis of NADP. Catalyzes specifically the phosphorylation on 2'-hydroxyl of the adenosine moiety of NAD to yield NADP. This is NAD kinase from Pediococcus pentosaceus (strain ATCC 25745 / CCUG 21536 / LMG 10740 / 183-1w).